We begin with the raw amino-acid sequence, 1183 residues long: DNA-directed RNA polymerase subunit beta (1183 aa).

Belongs to the RNA polymerase beta chain family. As to quaternary structure, the RNAP catalytic core consists of 2 alpha, 1 beta, 1 beta' and 1 omega subunit. When a sigma factor is associated with the core the holoenzyme is formed, which can initiate transcription.

It carries out the reaction RNA(n) + a ribonucleoside 5'-triphosphate = RNA(n+1) + diphosphate. Its function is as follows. DNA-dependent RNA polymerase catalyzes the transcription of DNA into RNA using the four ribonucleoside triphosphates as substrates. This chain is DNA-directed RNA polymerase subunit beta, found in Staphylococcus aureus (strain Mu50 / ATCC 700699).